Reading from the N-terminus, the 87-residue chain is Kappa-6-bungarotoxin (87 aa).

Residues 1-21 (MKTLLLSLVVVTIVCLDLGYT) form the signal peptide. Cystine bridges form between C24–C42, C35–C63, C48–C52, C67–C79, and C80–C85.

Belongs to the three-finger toxin family. Long-chain subfamily. Kappa-neurotoxin sub-subfamily. Homo- and heterodimer; non-covalently linked. Expressed by the venom gland.

It localises to the secreted. Its function is as follows. Postsynaptic neurotoxin that binds and inhibits neuronal nicotinic acetylcholine receptors (nAChR) with high affinity (IC(50)&lt;100 nM). Is a selective, and slowly reversible antagonist of alpha-3/CHRNA3-containing and some alpha-4/CHRNA4-containing AChRs. This Bungarus multicinctus (Many-banded krait) protein is Kappa-6-bungarotoxin.